The sequence spans 354 residues: NAD-dependent protein deacetylase hst2-2 (354 aa).

Residues 16–279 (QCQNQTTLDS…REVARHLGWD (264 aa)) form the Deacetylase sirtuin-type domain. Residues 43 to 63 (GAGL…TGLY) and 126 to 129 (QNID) each bind NAD(+). The active-site Proton acceptor is the histidine 146. Positions 154, 157, 178, and 183 each coordinate Zn(2+). Residues 220–222 (GTS), 245–247 (NRE), and cysteine 265 each bind NAD(+).

It belongs to the sirtuin family. Class I subfamily. Requires Zn(2+) as cofactor.

It localises to the nucleus. It catalyses the reaction N(6)-acetyl-L-lysyl-[protein] + NAD(+) + H2O = 2''-O-acetyl-ADP-D-ribose + nicotinamide + L-lysyl-[protein]. NAD-dependent histone deacetylase, which could function in telomeric silencing, cell cycle progression and chromosome stability. This is NAD-dependent protein deacetylase hst2-2 from Emericella nidulans (strain FGSC A4 / ATCC 38163 / CBS 112.46 / NRRL 194 / M139) (Aspergillus nidulans).